Reading from the N-terminus, the 276-residue chain is METRYTHSPADIRHYSTEQLRDEFLVEKVFIPGAISLTYTHNDRMIFGGVTPTTEELEIILDKELGVDYFLERRELGVINIGGPGFIEIDGAKETMKKQDGYYIGKETKHVRFSSENPDNPAKFYISCVPAHHKYPNVKISIDEITPMETGDPLTLNQRKIYQYIHPNVCESCQLQMGYTILEPGSAWNTMPCHTHERRMEAYVYFDMEEDTRIFHMMGKPDETKHLVMSNEQAAISPSWSIHSGVGTSNYSFIWAMCGENITYTDMDMVAMDQLK.

Residues His-194, His-196, Glu-201, and His-243 each coordinate Zn(2+).

Belongs to the KduI family. Zn(2+) serves as cofactor.

It catalyses the reaction 5-dehydro-4-deoxy-D-glucuronate = 3-deoxy-D-glycero-2,5-hexodiulosonate. Its pathway is glycan metabolism; pectin degradation; 2-dehydro-3-deoxy-D-gluconate from pectin: step 4/5. Its function is as follows. Catalyzes the isomerization of 5-dehydro-4-deoxy-D-glucuronate to 3-deoxy-D-glycero-2,5-hexodiulosonate. This Enterococcus faecalis (strain ATCC 700802 / V583) protein is 4-deoxy-L-threo-5-hexosulose-uronate ketol-isomerase 1 (kduI1).